The chain runs to 135 residues: MSDAVTIRTRKVISNPLLARKQFVVDVLHPNRANVSKDELREKLAEVYKAEKDAVSVFGFRTQFGGGKSVGFGLVYNSVAEAKKFEPTYRLVRYGLAEKVEKASRQQRKQKKNRDKKIFGTGKRLAKKVARRNAD.

Serine 2 carries the post-translational modification N-acetylserine. Serine 14 bears the Phosphoserine mark. Lysine 21 is covalently cross-linked (Glycyl lysine isopeptide (Lys-Gly) (interchain with G-Cter in ubiquitin)). Serine 56 bears the Phosphoserine mark. Residues 102–135 are disordered; it reads KASRQQRKQKKNRDKKIFGTGKRLAKKVARRNAD. Basic residues-rich tracts occupy residues 105 to 115 and 124 to 135; these read RQQRKQKKNRD and RLAKKVARRNAD.

It belongs to the eukaryotic ribosomal protein eS24 family. As to quaternary structure, component of the small ribosomal subunit (SSU). Mature yeast ribosomes consist of a small (40S) and a large (60S) subunit. The 40S small subunit contains 1 molecule of ribosomal RNA (18S rRNA) and 33 different proteins (encoded by 57 genes). The large 60S subunit contains 3 rRNA molecules (25S, 5.8S and 5S rRNA) and 46 different proteins (encoded by 81 genes). Post-translationally, N-terminally acetylated by acetyltransferase NatA. Also partially acetylated by NatC.

It localises to the cytoplasm. In terms of biological role, component of the ribosome, a large ribonucleoprotein complex responsible for the synthesis of proteins in the cell. The small ribosomal subunit (SSU) binds messenger RNAs (mRNAs) and translates the encoded message by selecting cognate aminoacyl-transfer RNA (tRNA) molecules. The large subunit (LSU) contains the ribosomal catalytic site termed the peptidyl transferase center (PTC), which catalyzes the formation of peptide bonds, thereby polymerizing the amino acids delivered by tRNAs into a polypeptide chain. The nascent polypeptides leave the ribosome through a tunnel in the LSU and interact with protein factors that function in enzymatic processing, targeting, and the membrane insertion of nascent chains at the exit of the ribosomal tunnel. This is Small ribosomal subunit protein eS24A from Saccharomyces cerevisiae (strain ATCC 204508 / S288c) (Baker's yeast).